The sequence spans 172 residues: MKEYKGKLNISKARIGIVISRFNETITKNLLEGSLDELERYGISTQNLPVAWVPGAFEIPLIAKQMALSGEFDAIICLGAIIRGTTPHFDYVASQSAAGILNVSLEINLPVVFGILTTDTVEQAMERSGVKMGNKGREAVQTAIEMIDLTDQLSLLRNHPHSSTANNTSVCK.

Residues phenylalanine 22 and 56-58 contribute to the 5-amino-6-(D-ribitylamino)uracil site; that span reads AFE. 78-79 contacts (2S)-2-hydroxy-3-oxobutyl phosphate; sequence LG. 80–82 lines the 5-amino-6-(D-ribitylamino)uracil pocket; sequence AII. Histidine 88 acts as the Proton donor in catalysis. Phenylalanine 113 contacts 5-amino-6-(D-ribitylamino)uracil. Arginine 127 is a (2S)-2-hydroxy-3-oxobutyl phosphate binding site.

It belongs to the DMRL synthase family.

It catalyses the reaction (2S)-2-hydroxy-3-oxobutyl phosphate + 5-amino-6-(D-ribitylamino)uracil = 6,7-dimethyl-8-(1-D-ribityl)lumazine + phosphate + 2 H2O + H(+). The protein operates within cofactor biosynthesis; riboflavin biosynthesis; riboflavin from 2-hydroxy-3-oxobutyl phosphate and 5-amino-6-(D-ribitylamino)uracil: step 1/2. Functionally, catalyzes the formation of 6,7-dimethyl-8-ribityllumazine by condensation of 5-amino-6-(D-ribitylamino)uracil with 3,4-dihydroxy-2-butanone 4-phosphate. This is the penultimate step in the biosynthesis of riboflavin. The polypeptide is 6,7-dimethyl-8-ribityllumazine synthase (Protochlamydia amoebophila (strain UWE25)).